The chain runs to 253 residues: Hydroxyacylglutathione hydrolase (253 aa).

Positions 59, 61, 63, 64, 118, 143, and 181 each coordinate Zn(2+).

The protein belongs to the metallo-beta-lactamase superfamily. Glyoxalase II family. Monomer. It depends on Zn(2+) as a cofactor.

It carries out the reaction an S-(2-hydroxyacyl)glutathione + H2O = a 2-hydroxy carboxylate + glutathione + H(+). Its pathway is secondary metabolite metabolism; methylglyoxal degradation; (R)-lactate from methylglyoxal: step 2/2. Its function is as follows. Thiolesterase that catalyzes the hydrolysis of S-D-lactoyl-glutathione to form glutathione and D-lactic acid. In Prochlorococcus marinus (strain SARG / CCMP1375 / SS120), this protein is Hydroxyacylglutathione hydrolase.